A 672-amino-acid chain; its full sequence is Protein OS-9 (672 aa).

The signal sequence occupies residues 1-26 (MAAEVLLSSLLGLLFLGLLLPARLTG). The MRH domain occupies 108 to 230 (APCLLKTKDW…TIRTSRLCPH (123 aa)). Residues Cys-110 and Cys-123 are joined by a disulfide bond. 3 residues coordinate a mannooligosaccharide derivative: Trp-117, Trp-118, and Gln-130. Residue Asn-177 is glycosylated (N-linked (GlcNAc...) asparagine). Intrachain disulfides connect Cys-181–Cys-216 and Cys-196–Cys-228. Asp-182, Arg-188, Glu-212, and Tyr-218 together coordinate a mannooligosaccharide derivative. Disordered stretches follow at residues 261–355 (RQAE…NVQV), 372–452 (KAAE…LLPS), 511–548 (ENQS…RVRV), and 637–672 (EANK…EFDF). Composition is skewed to basic and acidic residues over residues 263-281 (AESK…DTDR), 294-310 (PKKE…ESEL), 320-338 (AAAR…HEAA), 372-386 (KAAE…REQP), and 394-409 (PQRE…KDGE). Positions 414-435 (MEEEDGDDEEEEEEEEEDEEEQ) are enriched in acidic residues. Residues 637 to 652 (EANKERQRQSELESNY) show a composition bias toward basic and acidic residues. A compositionally biased stretch (acidic residues) spans 663-672 (DTGDLDEFDF).

Belongs to the OS-9 family. Component of the HRD1 complex, which comprises at least SYNV1/HRD1, DERL1/2, FAM8A1, HERPUD1/HERP, OS9, SEL1L and UBE2J1. FAM8A1 is stabilized by interaction with SYNV1, which prevents its proteasomal degradation. OS9 and UBE2J1 recruitment to the complex may be mediated by SEL1L. Through this complex, may interact with ERLEC1 and HSPA5. Interacts (via C-terminus) with CPNE6 (via second C2 domain); this interaction occurs in a calcium-dependent manner in vitro. Interacts with CREB3. Post-translationally, N-glycosylated. Intramolecular disulfide bonds.

Its subcellular location is the endoplasmic reticulum lumen. Lectin component of the HRD1 complex, which functions in endoplasmic reticulum (ER) quality control and ER-associated degradation (ERAD). Specifically recognizes and binds improperly folded glycoproteins as well as hyperglycosylated proteins, retain them in the ER, and transfers them to the ubiquitination machinery and promote their degradation. Possible targets include TRPV4 as well as hyperglycosylated HSP90B1. This is Protein OS-9 (Os9) from Mus musculus (Mouse).